A 244-amino-acid polypeptide reads, in one-letter code: 1-(5-phosphoribosyl)-5-[(5-phosphoribosylamino)methylideneamino] imidazole-4-carboxamide isomerase (244 aa).

The Proton acceptor role is filled by Asp-7. Asp-129 acts as the Proton donor in catalysis.

The protein belongs to the HisA/HisF family.

The protein localises to the cytoplasm. It catalyses the reaction 1-(5-phospho-beta-D-ribosyl)-5-[(5-phospho-beta-D-ribosylamino)methylideneamino]imidazole-4-carboxamide = 5-[(5-phospho-1-deoxy-D-ribulos-1-ylimino)methylamino]-1-(5-phospho-beta-D-ribosyl)imidazole-4-carboxamide. It functions in the pathway amino-acid biosynthesis; L-histidine biosynthesis; L-histidine from 5-phospho-alpha-D-ribose 1-diphosphate: step 4/9. The polypeptide is 1-(5-phosphoribosyl)-5-[(5-phosphoribosylamino)methylideneamino] imidazole-4-carboxamide isomerase (Pseudoalteromonas atlantica (strain T6c / ATCC BAA-1087)).